The sequence spans 337 residues: MAAFSCLDLQEGLRTLSILQWIPVYVLLGTLSILGMPYLLLFTTLWPLSVLFLVWIAYDWNTHIQDGRRSAWVRNWTLWKYFQSYFPVKLVKTHDLSPKHNYIILSHPHGILSYGAFINFATESTGFSRVFPSITPFLATLEGIFWIPFVRDYLMSLGICPVSKLSLTHKLTQKDSGNAVIIVPGGASESLLSRPGVSMIYLKKRQGFVKLALKTGAYLVPSYSFGENETYNQETFAEGTWLRFFQKNIQKIGKRILGINLCTIHGRGLTRGSWGFLPFNHPITTVVGEPLPVPKIPDPDKETVEKYLELYISALRKLFDQHKAEYGLSKTHELKIL.

A run of 2 helical transmembrane segments spans residues 22-42 (IPVYVLLGTLSILGMPYLLLF) and 102-122 (YIILSHPHGILSYGAFINFAT).

It belongs to the diacylglycerol acyltransferase family.

It is found in the endoplasmic reticulum membrane. The catalysed reaction is 1,2-di-(9Z-octadecenoyl)-sn-glycerol + (9Z)-octadecenoyl-CoA = 1,2,3-tri-(9Z-octadecenoyl)-glycerol + CoA. In terms of biological role, diglyceride acyltransferase that uses fatty acyl-CoA as substrate. Particularly active with oleate as a substrate. Has no wax synthase activity to produce wax esters. This Mus musculus (Mouse) protein is Diacylglycerol O-acyltransferase 2-like protein 6 (Dgat2l6).